A 142-amino-acid chain; its full sequence is Immunoglobulin iota chain (142 aa).

Positions 1–19 (MAWTSVLLMLLAYLTGCGP) are cleaved as a signal peptide. The segment at 20–41 (QPMVHQPPLASSSLGATIRLSC) is framework-1. A disulfide bridge connects residues Cys-41 and Cys-115. Residues 42 to 56 (TLSNDHNIGIYSIYW) are complementarity-determining-1. Residues 57–70 (YQQRPGHPPRFLLR) form a framework-2 region. The segment at 71-81 (YFSHSDKHQGP) is complementarity-determining-2. Residues 82-115 (DIPPRFSGSKDTTRNLGYLSISELQPEDEAVYYC) form a framework-3 region.

The protein belongs to the immunoglobulin superfamily. In terms of assembly, interacts with IGLL1. Interacts with SYNV1/HRD1 (via N-terminus); this interaction leads to increased VPREB1A ubiquitination and degradation in pre-B cells, possibly through a lysosomal, not proteasomal, pathway. Only expressed by pre-B-cells.

Its subcellular location is the endoplasmic reticulum. Associates with the Ig-mu chain to form a molecular complex that is expressed on the surface of pre-B-cells. This complex presumably regulates Ig gene rearrangements in the early steps of B-cell differentiation. This chain is Immunoglobulin iota chain, found in Mus musculus (Mouse).